Consider the following 333-residue polypeptide: 6-phosphogluconolactonase (333 aa).

The protein belongs to the cycloisomerase 2 family.

The catalysed reaction is 6-phospho-D-glucono-1,5-lactone + H2O = 6-phospho-D-gluconate + H(+). It participates in carbohydrate degradation; pentose phosphate pathway; D-ribulose 5-phosphate from D-glucose 6-phosphate (oxidative stage): step 2/3. Catalyzes the hydrolysis of 6-phosphogluconolactone to 6-phosphogluconate. The polypeptide is 6-phosphogluconolactonase (Yersinia enterocolitica serotype O:8 / biotype 1B (strain NCTC 13174 / 8081)).